The sequence spans 231 residues: Phosphatidylserine decarboxylase proenzyme (231 aa).

The active-site Schiff-base intermediate with substrate; via pyruvic acid is the S188. S188 carries the post-translational modification Pyruvic acid (Ser); by autocatalysis.

The protein belongs to the phosphatidylserine decarboxylase family. PSD-A subfamily. Heterodimer of a large membrane-associated beta subunit and a small pyruvoyl-containing alpha subunit. It depends on pyruvate as a cofactor. In terms of processing, is synthesized initially as an inactive proenzyme. Formation of the active enzyme involves a self-maturation process in which the active site pyruvoyl group is generated from an internal serine residue via an autocatalytic post-translational modification. Two non-identical subunits are generated from the proenzyme in this reaction, and the pyruvate is formed at the N-terminus of the alpha chain, which is derived from the carboxyl end of the proenzyme. The post-translation cleavage follows an unusual pathway, termed non-hydrolytic serinolysis, in which the side chain hydroxyl group of the serine supplies its oxygen atom to form the C-terminus of the beta chain, while the remainder of the serine residue undergoes an oxidative deamination to produce ammonia and the pyruvoyl prosthetic group on the alpha chain.

Its subcellular location is the cell membrane. It catalyses the reaction a 1,2-diacyl-sn-glycero-3-phospho-L-serine + H(+) = a 1,2-diacyl-sn-glycero-3-phosphoethanolamine + CO2. It participates in phospholipid metabolism; phosphatidylethanolamine biosynthesis; phosphatidylethanolamine from CDP-diacylglycerol: step 2/2. Functionally, catalyzes the formation of phosphatidylethanolamine (PtdEtn) from phosphatidylserine (PtdSer). In Rickettsia prowazekii (strain Madrid E), this protein is Phosphatidylserine decarboxylase proenzyme.